Reading from the N-terminus, the 262-residue chain is 27 kDa lipoprotein antigen (262 aa).

An N-terminal signal peptide occupies residues 1–28 (MSASCAVPRLTRFAVFAVAGATALSLSA). 2 stretches are compositionally biased toward low complexity: residues 28–57 (ACGSSNKSSSTSTSTSTSTSTVTSAAPSST) and 148–158 (STPGGASSTPP). 2 disordered regions span residues 28-60 (ACGSSNKSSSTSTSTSTSTSTVTSAAPSSTPNA) and 138-171 (VNGTCPKPHESTPGGASSTPPSGSPSPAPAKPAW). Residue Cys-29 is the site of N-palmitoyl cysteine attachment. Cys-29 carries S-diacylglycerol cysteine lipidation.

The protein resides in the cell membrane. The protein is 27 kDa lipoprotein antigen (Mi43) of Mycobacterium intracellulare.